We begin with the raw amino-acid sequence, 851 residues long: Alanine--tRNA ligase (851 aa).

4 residues coordinate Zn(2+): His-535, His-539, Cys-637, and His-641.

It belongs to the class-II aminoacyl-tRNA synthetase family. It depends on Zn(2+) as a cofactor.

Its subcellular location is the cytoplasm. The enzyme catalyses tRNA(Ala) + L-alanine + ATP = L-alanyl-tRNA(Ala) + AMP + diphosphate. In terms of biological role, catalyzes the attachment of alanine to tRNA(Ala) in a two-step reaction: alanine is first activated by ATP to form Ala-AMP and then transferred to the acceptor end of tRNA(Ala). Also edits incorrectly charged Ser-tRNA(Ala) and Gly-tRNA(Ala) via its editing domain. The polypeptide is Alanine--tRNA ligase (Acholeplasma laidlawii (strain PG-8A)).